Consider the following 52-residue polypeptide: Large ribosomal subunit protein bL33 (52 aa).

Belongs to the bacterial ribosomal protein bL33 family.

The sequence is that of Large ribosomal subunit protein bL33 (rpmG) from Chlamydia pneumoniae (Chlamydophila pneumoniae).